Consider the following 313-residue polypeptide: MITFPHRHLLGIKGLTEQDITLLLDRADEAVKISRQREKKTSSLRGLTQINLFFEASTRTQSSFELAGKRLGADVMNMSVGNSSVKKGETLIDTAMTLNAMHPDVLVVRHSSAGAASLLAQKVSCSVVNAGDGQHEHPTQALLDALTIRRAKGKLSRIIVAICGDVLHSRVARSNILLLNQMGARVRVVAPATLLPAGIAEMGAEVYHSMAEGLKDADVVMMLRLQRERMAGSFVPSVREYFHYYGLDAEKLKVAKDDALVMHPGPMNRGVEIASEIADGPQSVIEQQVEMGVAVRMAVMETLLLSQNQGPRL.

Residues arginine 59 and threonine 60 each coordinate carbamoyl phosphate. Residue lysine 87 coordinates L-aspartate. Residues arginine 109, histidine 137, and glutamine 140 each coordinate carbamoyl phosphate. The L-aspartate site is built by arginine 170 and arginine 224. Carbamoyl phosphate is bound by residues glycine 265 and proline 266.

The protein belongs to the aspartate/ornithine carbamoyltransferase superfamily. ATCase family. In terms of assembly, heterododecamer (2C3:3R2) of six catalytic PyrB chains organized as two trimers (C3), and six regulatory PyrI chains organized as three dimers (R2).

The enzyme catalyses carbamoyl phosphate + L-aspartate = N-carbamoyl-L-aspartate + phosphate + H(+). Its pathway is pyrimidine metabolism; UMP biosynthesis via de novo pathway; (S)-dihydroorotate from bicarbonate: step 2/3. Functionally, catalyzes the condensation of carbamoyl phosphate and aspartate to form carbamoyl aspartate and inorganic phosphate, the committed step in the de novo pyrimidine nucleotide biosynthesis pathway. The sequence is that of Aspartate carbamoyltransferase catalytic subunit from Rhizobium meliloti (strain 1021) (Ensifer meliloti).